Here is a 223-residue protein sequence, read N- to C-terminus: Ubiquitin carboxyl-terminal hydrolase isozyme L1 (223 aa).

Residue methionine 1 is modified to N-acetylmethionine. The region spanning 2–221 is the UCH catalytic domain; the sequence is QLKPMEINPE…VRFSAVALCK (220 aa). The tract at residues 5-10 is interaction with ubiquitin; sequence PMEINP. The active-site Nucleophile is the cysteine 90. Serine 125 is modified (phosphoserine). The active-site Proton donor is histidine 161. Positions 211-216 are interaction with ubiquitin; the sequence is EVRFSA. Cysteine 220 is lipidated: S-farnesyl cysteine. Residues 221–223 constitute a propeptide, removed in mature form; that stretch reads KAA.

It belongs to the peptidase C12 family. In terms of assembly, monomer. Homodimer. Interacts with COPS5 and SNCA. In terms of processing, O-glycosylated. In terms of tissue distribution, expressed in the placenta at all stages of pregnancy. Expression increases as pregnancy progresses.

It is found in the cytoplasm. The protein localises to the endoplasmic reticulum membrane. Its subcellular location is the nucleus. It catalyses the reaction Thiol-dependent hydrolysis of ester, thioester, amide, peptide and isopeptide bonds formed by the C-terminal Gly of ubiquitin (a 76-residue protein attached to proteins as an intracellular targeting signal).. Ubiquitin-protein hydrolase involved both in the processing of ubiquitin precursors and of ubiquitinated proteins. This enzyme is a thiol protease that recognizes and hydrolyzes a peptide bond at the C-terminal glycine of ubiquitin. Also binds to free monoubiquitin and may prevent its degradation in lysosomes. The homodimer may have ATP-independent ubiquitin ligase activity. This Macaca fascicularis (Crab-eating macaque) protein is Ubiquitin carboxyl-terminal hydrolase isozyme L1 (UCHL1).